Consider the following 200-residue polypeptide: Ciliary neurotrophic factor (200 aa).

Belongs to the CNTF family. In terms of tissue distribution, nervous system.

Its subcellular location is the cytoplasm. Its function is as follows. CNTF is a survival factor for various neuronal cell types. Seems to prevent the degeneration of motor axons after axotomy. This chain is Ciliary neurotrophic factor (CNTF), found in Sus scrofa (Pig).